A 696-amino-acid chain; its full sequence is MSESTEAPTPAPGHVREHWNELAEEVRQHQFRYYVRDAPIISDGEFDVLLGELNDLENQYPDLRTPDSPTQLVGGGFSTDFASADHLERMLSLDNVFATDELRTWISRVEQETGPDLHYLCEVKIDGVALNLVYENGRLDRAATRGDGRTGEEVTLNARTIDDIPEKLTGTDEYPIPALLEVRGEVFFRLEDFAALNAALVEEGKAPFANPRNSAAGSLRQKNPAVTARRRLGMICHGLGRSEGFEPVSQYDAYTALAAWGLPVSTHTARVTGADAVVDRVQYWGEHRHDVEHEIDGLVVKVDETSLQRRLGSTSRAPRWAIAYKYPPEEATTKLLDIRVNVGRTGRVTPFAYMEPVTVAGSTVSLATLHNGSEVKRKGVLIGDTVVLRKAGDVIPEVLGPVVDARTGDEYEFVMPTHCPECDTPLAPAKEGDADIRCPNQQYCPAQLRERVFHVAGRGAFDIEVLGYEAATSLLEAKAIGDEGDLFSLTEDDLLKTSLFRTKAGGLSANGRRLLDNLDSAKDKPLWRVLVALSIRHVGPTAARALAGEFGSLARIRESSVEELAAVDGVGGTIAAAVAEWFGVDWHQQIVEKWSAAGVRMEDERDESIPRNLEGLSIVVTGSLETFSRDQAKEAILIRGGKAAGSVSKKTAFVVVGESPGSKHDKAVELGVPVLDEDGFRRLLEGGPDAVAESGV.

Residues 43 to 47 (DGEFD), 92 to 93 (SL), and Glu-122 contribute to the NAD(+) site. Lys-124 (N6-AMP-lysine intermediate) is an active-site residue. Residues Arg-145, Glu-185, Lys-301, and Lys-325 each coordinate NAD(+). Zn(2+)-binding residues include Cys-419, Cys-422, Cys-438, and Cys-444. Residues 608-696 (SIPRNLEGLS…GPDAVAESGV (89 aa)) form the BRCT domain.

Belongs to the NAD-dependent DNA ligase family. LigA subfamily. It depends on Mg(2+) as a cofactor. Requires Mn(2+) as cofactor.

It carries out the reaction NAD(+) + (deoxyribonucleotide)n-3'-hydroxyl + 5'-phospho-(deoxyribonucleotide)m = (deoxyribonucleotide)n+m + AMP + beta-nicotinamide D-nucleotide.. In terms of biological role, DNA ligase that catalyzes the formation of phosphodiester linkages between 5'-phosphoryl and 3'-hydroxyl groups in double-stranded DNA using NAD as a coenzyme and as the energy source for the reaction. It is essential for DNA replication and repair of damaged DNA. This chain is DNA ligase, found in Rhodococcus jostii (strain RHA1).